Here is a 372-residue protein sequence, read N- to C-terminus: Peptidyl-prolyl cis-trans isomerase D (372 aa).

In terms of domain architecture, PPIase cyclophilin-type spans 10–173 (FFDIQIGQQQ…TDVTIAECGE (164 aa)). Positions 174-193 (LTGEDYDNADKQTPDATGDP) are disordered. TPR repeat units follow at residues 215-248 (ASEL…LNEF), 268-304 (FTLH…ASAK), and 309-342 (AKVY…APSD).

Belongs to the cyclophilin-type PPIase family. PPIase D subfamily.

Its subcellular location is the cytoplasm. It carries out the reaction [protein]-peptidylproline (omega=180) = [protein]-peptidylproline (omega=0). Its function is as follows. PPIases accelerate the folding of proteins. It catalyzes the cis-trans isomerization of proline imidic peptide bonds in oligopeptides. In Emericella nidulans (strain FGSC A4 / ATCC 38163 / CBS 112.46 / NRRL 194 / M139) (Aspergillus nidulans), this protein is Peptidyl-prolyl cis-trans isomerase D (cpr6).